Here is a 412-residue protein sequence, read N- to C-terminus: uncharacterized protein (412 aa).

[4Fe-4S] cluster contacts are provided by cysteine 62, cysteine 68, cysteine 71, and cysteine 143. Glutamine 243, phenylalanine 270, glutamate 290, and aspartate 338 together coordinate S-adenosyl-L-methionine. The Nucleophile role is filled by cysteine 364.

This sequence belongs to the class I-like SAM-binding methyltransferase superfamily. RNA M5U methyltransferase family.

This is an uncharacterized protein from Mesorhizobium japonicum (strain LMG 29417 / CECT 9101 / MAFF 303099) (Mesorhizobium loti (strain MAFF 303099)).